The sequence spans 684 residues: Probable potassium transport system protein Kup (684 aa).

Transmembrane regions (helical) follow at residues 19–39 (ALLV…LYVM), 61–81 (VSLI…LIAL), 104–124 (WLVL…MLTP), 151–171 (QVIW…RFGT), 177–197 (AFGP…FIAL), 223–243 (MGLF…ALYS), 255–275 (LSWP…AVWL), 303–323 (LGAI…LISG), 352–372 (LYIP…IGYF), 381–401 (AYGL…YQYL), 407–427 (PAVI…VFFI), and 433–453 (FLHG…VMYV).

The protein belongs to the HAK/KUP transporter (TC 2.A.72) family.

The protein localises to the cell membrane. It carries out the reaction K(+)(in) + H(+)(in) = K(+)(out) + H(+)(out). Transport of potassium into the cell. Likely operates as a K(+):H(+) symporter. The chain is Probable potassium transport system protein Kup from Lacticaseibacillus casei (strain BL23) (Lactobacillus casei).